A 404-amino-acid chain; its full sequence is Chorismate synthase (404 aa).

2 residues coordinate NADP(+): R40 and R46. FMN-binding positions include 135–137 (RAS), 256–257 (QA), G300, 315–319 (KPIST), and R341.

It belongs to the chorismate synthase family. Homotetramer. Requires FMNH2 as cofactor.

It catalyses the reaction 5-O-(1-carboxyvinyl)-3-phosphoshikimate = chorismate + phosphate. It functions in the pathway metabolic intermediate biosynthesis; chorismate biosynthesis; chorismate from D-erythrose 4-phosphate and phosphoenolpyruvate: step 7/7. Functionally, catalyzes the anti-1,4-elimination of the C-3 phosphate and the C-6 proR hydrogen from 5-enolpyruvylshikimate-3-phosphate (EPSP) to yield chorismate, which is the branch point compound that serves as the starting substrate for the three terminal pathways of aromatic amino acid biosynthesis. This reaction introduces a second double bond into the aromatic ring system. This chain is Chorismate synthase, found in Mycobacterium sp. (strain JLS).